We begin with the raw amino-acid sequence, 111 residues long: Photosystem II reaction center Psb28 protein (111 aa).

Belongs to the Psb28 family. Part of the photosystem II complex.

The protein localises to the cellular thylakoid membrane. In Crocosphaera subtropica (strain ATCC 51142 / BH68) (Cyanothece sp. (strain ATCC 51142)), this protein is Photosystem II reaction center Psb28 protein.